We begin with the raw amino-acid sequence, 1513 residues long: Protein tincar (1513 aa).

Residues 1–77 (MGGKHQGSGA…DSGSYLHLNS (77 aa)) are Cytoplasmic-facing. The chain crosses the membrane as a helical span at residues 78–98 (LWSIWYGVMLTLFQGYLAMHG). At 99 to 120 (AYRFLGCSLIPWKIEPVAELNL) the chain is on the extracellular side. The chain crosses the membrane as a helical span at residues 121–141 (QIVLSGVVFILLPVFFTSAVF). At 142-181 (KVGNLANDGIKLATGARERRCTLSPHDGLEEESRGGTLRA) the chain is on the cytoplasmic side. Residues 182 to 202 (LWTHGGPTAAFVHIVIALCLL) traverse the membrane as a helical segment. The Extracellular segment spans residues 203-668 (LPRLLLEARI…VAIFSQPPSA (466 aa)). 3 disordered regions span residues 247-266 (TPFP…HQHG), 354-373 (ERQE…DEGV), and 383-532 (MPDF…SIHR). A compositionally biased stretch (low complexity) spans 427–466 (ASSSSSSTTSTTTTTTTSTTTTAATTTSTRGTSTTTTTTT). Basic residues predominate over residues 478–507 (SAHHHHGKSRKHHKHHNKQRQQQPPRRHHV). Residues 523-532 (TTTRDSSIHR) show a composition bias toward basic and acidic residues. Residues 669–689 (EFVNLLCALLVWSVRYPAVFW) form a helical membrane-spanning segment. Over 690-696 (NTSKAFA) the chain is Cytoplasmic. The chain crosses the membrane as a helical span at residues 697–717 (CVFSLQMVVAALDIILGYVGI). Over 718–736 (SNLYKLQIYAEAMPVHQPG) the chain is Extracellular. Residues 737–757 (LILNAVVTLALYLLSTALVLA) form a helical membrane-spanning segment. Residues 758 to 787 (SSMVMYLYGHGRLATRMRDRSIITLKTHQT) are Cytoplasmic-facing. The chain crosses the membrane as a helical span at residues 788–808 (WIYFAHCASLCFVLALAVVKA). Residues 809 to 826 (PLLNDLSATYKNNLHCPT) are Extracellular-facing. Residues 827-847 (FLAALVGVTHLLLWIVIWLCL) form a helical membrane-spanning segment. The Cytoplasmic portion of the chain corresponds to 848 to 1513 (TIKRRWHFKL…CGLYVTAQLH (666 aa)). 2 stretches are compositionally biased toward low complexity: residues 879 to 903 (SSGQ…VNGG) and 1060 to 1071 (QQQQQQQQQQRQ). Disordered stretches follow at residues 879–913 (SSGQ…MSTA), 1045–1090 (EYDE…SGLG), 1115–1155 (ASTS…HSAG), 1173–1214 (EHHH…PHQH), and 1231–1335 (AHIA…DPAA). Over residues 1122-1149 (PPQPSAQAPPPPPPLPIKGAPVPQPPAV) the composition is skewed to pro residues. Low complexity-rich tracts occupy residues 1179-1208 (LQHS…LQQQ) and 1255-1285 (TPRS…SGVH). Positions 1286–1296 (SGEERELEVII) are enriched in basic and acidic residues. Over residues 1303–1314 (KPPPRPPQPPIQ) the composition is skewed to pro residues. A compositionally biased stretch (polar residues) spans 1324–1335 (MRMSSFNADPAA).

Expression varies in tissues throughout development. At stage 5, expressed in the embryo dorsal region followed by expression in a striped pattern at stage 6. During gastrulation, expressed in ventral region and ventral nerve cord. Also detected in many neurons in the externa sensilla and chordotonal organ. At stage 16, expressed on the surface of the midgut. Additionally, expressed in a subset of cardioblasts (Tin+ subpopulation) during dorsal vessel formation. In third-instar larval tissues, expressed in the eye and antennal disks. In the antennal disks, expressed in the second antennal segments. In the eye disks, strongest expression found in the ocelli, and in the differentiating ommatidial cells. Also expressed in all cells within and in the vicinity of the morphogenetic furrow.

The protein localises to the membrane. Involved in eye morphogenesis. May be essential for the normal differentiation of ommatidial cells. The protein is Protein tincar (tinc) of Drosophila melanogaster (Fruit fly).